A 346-amino-acid polypeptide reads, in one-letter code: Phosphate acyltransferase (346 aa).

It belongs to the PlsX family. Homodimer. Probably interacts with PlsY.

Its subcellular location is the cytoplasm. It catalyses the reaction a fatty acyl-[ACP] + phosphate = an acyl phosphate + holo-[ACP]. Its pathway is lipid metabolism; phospholipid metabolism. In terms of biological role, catalyzes the reversible formation of acyl-phosphate (acyl-PO(4)) from acyl-[acyl-carrier-protein] (acyl-ACP). This enzyme utilizes acyl-ACP as fatty acyl donor, but not acyl-CoA. The sequence is that of Phosphate acyltransferase from Brucella suis biovar 1 (strain 1330).